The sequence spans 141 residues: Hemoglobin subunit alpha (141 aa).

The Globin domain occupies 1–141; sequence VLSANDKANV…VSTVLTSKYR (141 aa). The residue at position 3 (Ser-3) is a Phosphoserine. An N6-succinyllysine mark is found at Lys-7 and Lys-11. Lys-16 carries the post-translational modification N6-acetyllysine; alternate. Lys-16 bears the N6-succinyllysine; alternate mark. Position 24 is a phosphotyrosine (Tyr-24). Ser-35 bears the Phosphoserine mark. Lys-40 carries the post-translational modification N6-succinyllysine. Position 49 is a phosphoserine (Ser-49). His-58 contacts O2. Residue His-87 participates in heme b binding. At Ser-102 the chain carries Phosphoserine. Position 108 is a phosphothreonine (Thr-108). A phosphoserine mark is found at Ser-124 and Ser-131. Phosphothreonine is present on residues Thr-134 and Thr-137. Residue Ser-138 is modified to Phosphoserine.

This sequence belongs to the globin family. As to quaternary structure, heterotetramer of two alpha chains and two beta chains. In terms of tissue distribution, red blood cells.

Functionally, involved in oxygen transport from the lung to the various peripheral tissues. Its function is as follows. Hemopressin acts as an antagonist peptide of the cannabinoid receptor CNR1. Hemopressin-binding efficiently blocks cannabinoid receptor CNR1 and subsequent signaling. The protein is Hemoglobin subunit alpha (HBA) of Suncus murinus (Asian house shrew).